Reading from the N-terminus, the 254-residue chain is Demethylmenaquinone methyltransferase (254 aa).

S-adenosyl-L-methionine is bound by residues threonine 62, aspartate 80, 122–123 (DG), and serine 139.

Belongs to the class I-like SAM-binding methyltransferase superfamily. MenG/UbiE family.

It catalyses the reaction a 2-demethylmenaquinol + S-adenosyl-L-methionine = a menaquinol + S-adenosyl-L-homocysteine + H(+). It participates in quinol/quinone metabolism; menaquinone biosynthesis; menaquinol from 1,4-dihydroxy-2-naphthoate: step 2/2. Methyltransferase required for the conversion of demethylmenaquinol (DMKH2) to menaquinol (MKH2). This Parafrankia sp. (strain EAN1pec) protein is Demethylmenaquinone methyltransferase.